A 245-amino-acid chain; its full sequence is 1-(5-phosphoribosyl)-5-[(5-phosphoribosylamino)methylideneamino] imidazole-4-carboxamide isomerase (245 aa).

Asp-7 serves as the catalytic Proton acceptor. Asp-129 functions as the Proton donor in the catalytic mechanism.

This sequence belongs to the HisA/HisF family.

It localises to the cytoplasm. The enzyme catalyses 1-(5-phospho-beta-D-ribosyl)-5-[(5-phospho-beta-D-ribosylamino)methylideneamino]imidazole-4-carboxamide = 5-[(5-phospho-1-deoxy-D-ribulos-1-ylimino)methylamino]-1-(5-phospho-beta-D-ribosyl)imidazole-4-carboxamide. Its pathway is amino-acid biosynthesis; L-histidine biosynthesis; L-histidine from 5-phospho-alpha-D-ribose 1-diphosphate: step 4/9. The chain is 1-(5-phosphoribosyl)-5-[(5-phosphoribosylamino)methylideneamino] imidazole-4-carboxamide isomerase from Cronobacter sakazakii (strain ATCC BAA-894) (Enterobacter sakazakii).